Consider the following 409-residue polypeptide: Shaggy-related protein kinase NtK-1 (409 aa).

Positions 1–27 (MTSVGLAPVSGLRESSSHSVGVDRLPE) are disordered. Positions 73-357 (YMAERIVGQG…ALEAVTHAFF (285 aa)) constitute a Protein kinase domain. Residues 79–87 (VGQGSFGVV) and Lys102 each bind ATP. Asp198 (proton acceptor) is an active-site residue.

It belongs to the protein kinase superfamily. CMGC Ser/Thr protein kinase family. GSK-3 subfamily. In terms of processing, autophosphorylated mainly on threonine and serine residues.

It catalyses the reaction L-seryl-[protein] + ATP = O-phospho-L-seryl-[protein] + ADP + H(+). It carries out the reaction L-threonyl-[protein] + ATP = O-phospho-L-threonyl-[protein] + ADP + H(+). Functionally, may mediate extracellular signals to regulate transcription in differentiating cells. The protein is Shaggy-related protein kinase NtK-1 (NTK-1) of Nicotiana tabacum (Common tobacco).